Reading from the N-terminus, the 370-residue chain is UDP-3-O-acylglucosamine N-acyltransferase (370 aa).

Residue His-252 is the Proton acceptor of the active site. The disordered stretch occupies residues 350 to 370; the sequence is AAGRQDGPAANAASSSAGDKA. The span at 358 to 370 shows a compositional bias: low complexity; sequence AANAASSSAGDKA.

This sequence belongs to the transferase hexapeptide repeat family. LpxD subfamily. In terms of assembly, homotrimer.

The catalysed reaction is a UDP-3-O-[(3R)-3-hydroxyacyl]-alpha-D-glucosamine + a (3R)-hydroxyacyl-[ACP] = a UDP-2-N,3-O-bis[(3R)-3-hydroxyacyl]-alpha-D-glucosamine + holo-[ACP] + H(+). The protein operates within bacterial outer membrane biogenesis; LPS lipid A biosynthesis. Functionally, catalyzes the N-acylation of UDP-3-O-acylglucosamine using 3-hydroxyacyl-ACP as the acyl donor. Is involved in the biosynthesis of lipid A, a phosphorylated glycolipid that anchors the lipopolysaccharide to the outer membrane of the cell. In Paraburkholderia xenovorans (strain LB400), this protein is UDP-3-O-acylglucosamine N-acyltransferase.